The chain runs to 388 residues: Alanine racemase 2 (388 aa).

Lys39 functions as the Proton acceptor; specific for D-alanine in the catalytic mechanism. Lys39 carries the N6-(pyridoxal phosphate)lysine modification. Substrate is bound at residue Arg137. Tyr267 acts as the Proton acceptor; specific for L-alanine in catalysis. Met315 is a substrate binding site.

It belongs to the alanine racemase family. It depends on pyridoxal 5'-phosphate as a cofactor.

It catalyses the reaction L-alanine = D-alanine. Its pathway is amino-acid biosynthesis; D-alanine biosynthesis; D-alanine from L-alanine: step 1/1. In terms of biological role, catalyzes the interconversion of L-alanine and D-alanine. May also act on other amino acids. In Caldanaerobacter subterraneus subsp. tengcongensis (strain DSM 15242 / JCM 11007 / NBRC 100824 / MB4) (Thermoanaerobacter tengcongensis), this protein is Alanine racemase 2 (alr2).